We begin with the raw amino-acid sequence, 232 residues long: Membrane steroid-binding protein 1 (232 aa).

The helical transmembrane segment at 25–45 threads the bilayer; it reads AAFFTAVAAAAALYHVVSGIF. Disordered regions lie at residues 48 to 77 and 172 to 232; these read PPPPPPPRPRDEPEAEPLPPPVQLGEVSEE and TVPV…AKES. A Cytochrome b5 heme-binding domain is found at 71-170; sequence LGEVSEEELR…GKYVKVGTVK (100 aa). Positions 73–170 are steroid-binding; the sequence is EVSEEELRQY…GKYVKVGTVK (98 aa). Positions 179 to 193 are enriched in low complexity; sequence APSTSPETTETAAAA. A compositionally biased stretch (basic and acidic residues) spans 194-219; the sequence is EPEKAPATEEKPREVSSEEVKEKEDA.

The protein belongs to the cytochrome b5 family. MAPR subfamily. As to quaternary structure, interacts with SERL2. In terms of tissue distribution, expressed in leaf sheaths, leaf blades and panicles.

The protein resides in the cell membrane. Its function is as follows. Binds multiple steroid compounds. May act as a coreceptor with SERL2 and enhance its endocytosis. The protein is Membrane steroid-binding protein 1 of Oryza sativa subsp. japonica (Rice).